We begin with the raw amino-acid sequence, 330 residues long: Ketol-acid reductoisomerase (NADP(+)) (330 aa).

The region spanning 2–182 is the KARI N-terminal Rossmann domain; the sequence is ARMYYDEDAN…GGTRAGVLET (181 aa). NADP(+)-binding positions include 25 to 28, Ser-51, Ser-53, and 83 to 86; these read YGSQ and DEVQ. His-108 is a catalytic residue. Gly-134 contributes to the NADP(+) binding site. The region spanning 183 to 328 is the KARI C-terminal knotted domain; the sequence is TFREETETDL…QDLRAMMSWL (146 aa). Residues Asp-191, Glu-195, Glu-227, and Glu-231 each coordinate Mg(2+). Ser-252 lines the substrate pocket.

The protein belongs to the ketol-acid reductoisomerase family. Mg(2+) is required as a cofactor.

It carries out the reaction (2R)-2,3-dihydroxy-3-methylbutanoate + NADP(+) = (2S)-2-acetolactate + NADPH + H(+). The enzyme catalyses (2R,3R)-2,3-dihydroxy-3-methylpentanoate + NADP(+) = (S)-2-ethyl-2-hydroxy-3-oxobutanoate + NADPH + H(+). It participates in amino-acid biosynthesis; L-isoleucine biosynthesis; L-isoleucine from 2-oxobutanoate: step 2/4. The protein operates within amino-acid biosynthesis; L-valine biosynthesis; L-valine from pyruvate: step 2/4. Involved in the biosynthesis of branched-chain amino acids (BCAA). Catalyzes an alkyl-migration followed by a ketol-acid reduction of (S)-2-acetolactate (S2AL) to yield (R)-2,3-dihydroxy-isovalerate. In the isomerase reaction, S2AL is rearranged via a Mg-dependent methyl migration to produce 3-hydroxy-3-methyl-2-ketobutyrate (HMKB). In the reductase reaction, this 2-ketoacid undergoes a metal-dependent reduction by NADPH to yield (R)-2,3-dihydroxy-isovalerate. This chain is Ketol-acid reductoisomerase (NADP(+)), found in Microcystis aeruginosa (strain NIES-843 / IAM M-2473).